The sequence spans 70 residues: ATP synthase subunit c (70 aa).

The next 2 membrane-spanning stretches (helical) occupy residues 5–25 and 47–67; these read AAAI…GLIV and FIGV…AFMV.

Belongs to the ATPase C chain family. As to quaternary structure, F-type ATPases have 2 components, F(1) - the catalytic core - and F(0) - the membrane proton channel. F(1) has five subunits: alpha(3), beta(3), gamma(1), delta(1), epsilon(1). F(0) has three main subunits: a(1), b(2) and c(10-14). The alpha and beta chains form an alternating ring which encloses part of the gamma chain. F(1) is attached to F(0) by a central stalk formed by the gamma and epsilon chains, while a peripheral stalk is formed by the delta and b chains.

Its subcellular location is the cell membrane. F(1)F(0) ATP synthase produces ATP from ADP in the presence of a proton or sodium gradient. F-type ATPases consist of two structural domains, F(1) containing the extramembraneous catalytic core and F(0) containing the membrane proton channel, linked together by a central stalk and a peripheral stalk. During catalysis, ATP synthesis in the catalytic domain of F(1) is coupled via a rotary mechanism of the central stalk subunits to proton translocation. In terms of biological role, key component of the F(0) channel; it plays a direct role in translocation across the membrane. A homomeric c-ring of between 10-14 subunits forms the central stalk rotor element with the F(1) delta and epsilon subunits. The polypeptide is ATP synthase subunit c (Anoxybacillus flavithermus (strain DSM 21510 / WK1)).